Reading from the N-terminus, the 183-residue chain is Putative 3-methyladenine DNA glycosylase (183 aa).

The protein belongs to the DNA glycosylase MPG family.

This Legionella pneumophila (strain Lens) protein is Putative 3-methyladenine DNA glycosylase.